The following is a 286-amino-acid chain: Release factor glutamine methyltransferase (286 aa).

S-adenosyl-L-methionine-binding residues include Asp-136 and Asn-179. 179-182 (NPPY) contributes to the substrate binding site.

This sequence belongs to the protein N5-glutamine methyltransferase family. PrmC subfamily.

It catalyses the reaction L-glutaminyl-[peptide chain release factor] + S-adenosyl-L-methionine = N(5)-methyl-L-glutaminyl-[peptide chain release factor] + S-adenosyl-L-homocysteine + H(+). In terms of biological role, methylates the class 1 translation termination release factors RF1/PrfA and RF2/PrfB on the glutamine residue of the universally conserved GGQ motif. The polypeptide is Release factor glutamine methyltransferase (Borreliella burgdorferi (strain ATCC 35210 / DSM 4680 / CIP 102532 / B31) (Borrelia burgdorferi)).